A 327-amino-acid polypeptide reads, in one-letter code: tRNA uridine(34) hydroxylase (327 aa).

Residues 130-224 (LDEDTVVLDT…YGKDPEVQGE (95 aa)) enclose the Rhodanese domain. Cys184 (cysteine persulfide intermediate) is an active-site residue.

Belongs to the TrhO family.

The catalysed reaction is uridine(34) in tRNA + AH2 + O2 = 5-hydroxyuridine(34) in tRNA + A + H2O. In terms of biological role, catalyzes oxygen-dependent 5-hydroxyuridine (ho5U) modification at position 34 in tRNAs. In Streptococcus thermophilus (strain CNRZ 1066), this protein is tRNA uridine(34) hydroxylase.